We begin with the raw amino-acid sequence, 185 residues long: Ribosome-recycling factor (185 aa).

Belongs to the RRF family.

The protein localises to the cytoplasm. Functionally, responsible for the release of ribosomes from messenger RNA at the termination of protein biosynthesis. May increase the efficiency of translation by recycling ribosomes from one round of translation to another. This chain is Ribosome-recycling factor, found in Brevibacillus brevis (strain 47 / JCM 6285 / NBRC 100599).